The sequence spans 564 residues: Keratin, type II cytoskeletal 6A (564 aa).

Positions 1–11 are enriched in low complexity; sequence MASTSTTIRSH. Residues 1–23 are disordered; it reads MASTSTTIRSHSSSRRGFSANSA. N-acetylalanine is present on alanine 2. Residues 2–162 form a head region; the sequence is ASTSTTIRSH…DPTIQRVRAE (161 aa). The segment at 163 to 198 is coil 1A; that stretch reads EREQIKTLNNKFASFIDKVRFLEQQNKVLETKWTLL. The IF rod domain maps to 163–476; sequence EREQIKTLNN…KLLEGEECRL (314 aa). The linker 1 stretch occupies residues 199 to 217; it reads QEQGTKTVRQNLEPLFEQY. The segment at 218-309 is coil 1B; sequence INNLRRQLDS…ALYDAELSQM (92 aa). The segment at 310–333 is linker 12; that stretch reads QTHISDTSVVLSMDNNRNLDLDSI. The tract at residues 334–472 is coil 2; that stretch reads IAEVKAQYEE…ATYRKLLEGE (139 aa). Positions 473–564 are tail; sequence ECRLNGEGVG…SSSSRKSYKH (92 aa).

This sequence belongs to the intermediate filament family. As to quaternary structure, heterodimer of a type I and a type II keratin. KRT6 isomers associate with KRT16 and/or KRT17. Interacts with TCHP. As to expression, expressed in the corneal epithelium (at protein level).

In terms of biological role, epidermis-specific type I keratin involved in wound healing. Involved in the activation of follicular keratinocytes after wounding, while it does not play a major role in keratinocyte proliferation or migration. Participates in the regulation of epithelial migration by inhibiting the activity of SRC during wound repair. The sequence is that of Keratin, type II cytoskeletal 6A (KRT6A) from Homo sapiens (Human).